Here is a 78-residue protein sequence, read N- to C-terminus: Acyl carrier protein (78 aa).

One can recognise a Carrier domain in the interval 2 to 77; that stretch reads STIEERVKKI…AAIDYILSHQ (76 aa). Serine 37 is modified (O-(pantetheine 4'-phosphoryl)serine).

This sequence belongs to the acyl carrier protein (ACP) family. 4'-phosphopantetheine is transferred from CoA to a specific serine of apo-ACP by AcpS. This modification is essential for activity because fatty acids are bound in thioester linkage to the sulfhydryl of the prosthetic group.

The protein localises to the cytoplasm. It participates in lipid metabolism; fatty acid biosynthesis. Its function is as follows. Carrier of the growing fatty acid chain in fatty acid biosynthesis. This is Acyl carrier protein from Tolumonas auensis (strain DSM 9187 / NBRC 110442 / TA 4).